A 337-amino-acid chain; its full sequence is 4-hydroxyproline 2-epimerase (337 aa).

Cys91 functions as the Proton acceptor in the catalytic mechanism. Residues 92–93, Asp252, and 257–258 contribute to the substrate site; these read GH and GT.

Belongs to the proline racemase family.

The enzyme catalyses trans-4-hydroxy-L-proline = cis-4-hydroxy-D-proline. Functionally, catalyzes the epimerization of trans-4-hydroxy-L-proline (t4LHyp) to cis-4-hydroxy-D-proline (c4DHyp). Is likely involved in a degradation pathway that converts t4LHyp to alpha-ketoglutarate. Displays no proline racemase activity. This Cereibacter sphaeroides (strain ATCC 17029 / ATH 2.4.9) (Rhodobacter sphaeroides) protein is 4-hydroxyproline 2-epimerase.